Here is a 333-residue protein sequence, read N- to C-terminus: Lipoyl synthase (333 aa).

Residues Met1–Lys29 form a disordered region. 7 residues coordinate [4Fe-4S] cluster: Cys80, Cys85, Cys91, Cys106, Cys110, Cys113, and Ser320. In terms of domain architecture, Radical SAM core spans Cys91–Thr309.

This sequence belongs to the radical SAM superfamily. Lipoyl synthase family. [4Fe-4S] cluster is required as a cofactor.

Its subcellular location is the cytoplasm. It carries out the reaction [[Fe-S] cluster scaffold protein carrying a second [4Fe-4S](2+) cluster] + N(6)-octanoyl-L-lysyl-[protein] + 2 oxidized [2Fe-2S]-[ferredoxin] + 2 S-adenosyl-L-methionine + 4 H(+) = [[Fe-S] cluster scaffold protein] + N(6)-[(R)-dihydrolipoyl]-L-lysyl-[protein] + 4 Fe(3+) + 2 hydrogen sulfide + 2 5'-deoxyadenosine + 2 L-methionine + 2 reduced [2Fe-2S]-[ferredoxin]. It functions in the pathway protein modification; protein lipoylation via endogenous pathway; protein N(6)-(lipoyl)lysine from octanoyl-[acyl-carrier-protein]: step 2/2. Its function is as follows. Catalyzes the radical-mediated insertion of two sulfur atoms into the C-6 and C-8 positions of the octanoyl moiety bound to the lipoyl domains of lipoate-dependent enzymes, thereby converting the octanoylated domains into lipoylated derivatives. The polypeptide is Lipoyl synthase (Ralstonia nicotianae (strain ATCC BAA-1114 / GMI1000) (Ralstonia solanacearum)).